The chain runs to 439 residues: Aspartate--tRNA(Asp/Asn) ligase (439 aa).

Glu177 contacts L-aspartate. Positions 199 to 202 (QLYK) are aspartate. Arg221 lines the L-aspartate pocket. ATP-binding positions include 221-223 (RAE), 229-231 (RHL), and Glu362. 2 residues coordinate Mg(2+): Glu362 and Ser365. Residues Ser365 and Arg369 each coordinate L-aspartate. 410 to 413 (GADR) contributes to the ATP binding site.

It belongs to the class-II aminoacyl-tRNA synthetase family. Type 2 subfamily. In terms of assembly, homodimer. Requires Mg(2+) as cofactor.

The protein localises to the cytoplasm. It carries out the reaction tRNA(Asx) + L-aspartate + ATP = L-aspartyl-tRNA(Asx) + AMP + diphosphate. Functionally, aspartyl-tRNA synthetase with relaxed tRNA specificity since it is able to aspartylate not only its cognate tRNA(Asp) but also tRNA(Asn). Reaction proceeds in two steps: L-aspartate is first activated by ATP to form Asp-AMP and then transferred to the acceptor end of tRNA(Asp/Asn). The sequence is that of Aspartate--tRNA(Asp/Asn) ligase from Methanosphaera stadtmanae (strain ATCC 43021 / DSM 3091 / JCM 11832 / MCB-3).